The sequence spans 27 residues: Larval-specific very high density lipoprotein (27 aa).

In terms of assembly, homodimer. As to expression, hemolymph.

Its subcellular location is the secreted. It is found in the extracellular space. Its function is as follows. Unknown (it might play a role in lipid transport and/or storage protein metabolism during metamorphosis). The sequence is that of Larval-specific very high density lipoprotein from Apis mellifera (Honeybee).